A 457-amino-acid polypeptide reads, in one-letter code: Multidrug resistance protein MdtK (457 aa).

12 helical membrane passes run Leu11–Val31, Ile53–Ala73, Val93–Ile113, Ala127–Met147, Gly160–Tyr180, Leu188–Met208, Met243–Val263, Ile276–Thr296, Arg316–Phe336, Leu357–Val377, Ile387–Gly407, and Pro418–Trp438.

This sequence belongs to the multi antimicrobial extrusion (MATE) (TC 2.A.66.1) family. MdtK subfamily.

The protein localises to the cell inner membrane. Its function is as follows. Multidrug efflux pump that functions probably as a Na(+)/drug antiporter. The protein is Multidrug resistance protein MdtK of Cronobacter sakazakii (strain ATCC BAA-894) (Enterobacter sakazakii).